The chain runs to 293 residues: Membrane protein RL13 (293 aa).

An N-terminal signal peptide occupies residues 1–19; the sequence is MHWHLAITWTVIILTFSEC. The chain crosses the membrane as a helical span at residues 245–265; it reads IPLGIHAVWAGIVVSVALIAL.

Its subcellular location is the virion membrane. May play a role in modifying tropism or in modulating cell signaling during virus entry. Since RL13 expression severely impairs HCMV replication in epithelial cell cultures, it may act as a regulator promoting persistence by suppressing the switch to fully lytic infection. This chain is Membrane protein RL13 (RL13), found in Human cytomegalovirus (strain Merlin) (HHV-5).